A 663-amino-acid chain; its full sequence is Rho GTPase-activating protein 18 (663 aa).

Residues 15 to 37 are disordered; the sequence is YHPSGKDQTVGNSHAKAGEEATS. 2 positions are modified to phosphoserine: Ser66 and Ser69. Phosphothreonine is present on Thr158. 2 disordered regions span residues 179–227 and 243–277; these read RESK…PAPE and QKESSKEKIQKSKGDDATLPSFRLPKDKTGTTRIG. Basic and acidic residues-rich tracts occupy residues 197 to 219 and 245 to 258; these read NENKYQGRDDEASNLVGEEKLIP and ESSKEKIQKSKGDD. Ser263 is modified (phosphoserine). One can recognise a Rho-GAP domain in the interval 324-523; sequence VPLTALLEQD…LLIKYQKLLW (200 aa). Ser610 is subject to Phosphoserine.

Interacts with MPHOSPH6.

Its subcellular location is the cytoplasm. Functionally, rho GTPase activating protein that suppresses F-actin polymerization by inhibiting Rho. Rho GTPase activating proteins act by converting Rho-type GTPases to an inactive GDP-bound state. Plays a key role in tissue tension and 3D tissue shape by regulating cortical actomyosin network formation. Acts downstream of YAP1 and inhibits actin polymerization, which in turn reduces nuclear localization of YAP1. Regulates cell shape, spreading, and migration. The sequence is that of Rho GTPase-activating protein 18 from Homo sapiens (Human).